The following is a 1232-amino-acid chain: Pyruvate:ferredoxin oxidoreductase (1232 aa).

Residue Thr-31 coordinates pyruvate. A thiamine diphosphate-binding site is contributed by Glu-64. A pyruvate-binding site is contributed by Arg-114. Residues 427–431 (ADGTV), Lys-459, Asn-560, and Asn-602 each bind CoA. 4Fe-4S ferredoxin-type domains are found at residues 680–709 (NVPQWVPENCIQCNQCAFVCPHSAILPVLA) and 736–767 (FRIQINTLDCMGCGNCADICPPKEKALVMQPL). [4Fe-4S] cluster-binding residues include Cys-689, Cys-692, Cys-695, Cys-699, Cys-745, Cys-748, Cys-751, Cys-755, Cys-812, and Cys-815. Thiamine diphosphate-binding positions include Glu-817, Cys-840, and 962 to 965 (GDGW). Residue Cys-840 coordinates [4Fe-4S] cluster. Asp-963 is a binding site for Mg(2+). Residues Asp-983 and Asn-985 each contribute to the Ca(2+) site. Mg(2+) is bound by residues Thr-991 and Val-993. A thiamine diphosphate-binding site is contributed by 991–996 (TEVYSN). The Ca(2+) site is built by Ala-1056, Phe-1059, Gly-1061, and Ser-1063. Cys-1071 serves as a coordination point for [4Fe-4S] cluster. An intrachain disulfide couples Cys-1195 to Cys-1212. Residues 1197-1232 (RDDTPMMARPDSGEACDQNRAGTSEQQGDLSKRTKK) form a disordered region. Polar residues predominate over residues 1216–1225 (RAGTSEQQGD).

Belongs to the pyruvate:ferredoxin/flavodoxin oxidoreductase family. Homodimer. The cofactor is [4Fe-4S] cluster. It depends on thiamine diphosphate as a cofactor. Mg(2+) serves as cofactor.

It localises to the cytoplasm. It catalyses the reaction 2 oxidized [2Fe-2S]-[ferredoxin] + pyruvate + CoA = 2 reduced [2Fe-2S]-[ferredoxin] + acetyl-CoA + CO2 + H(+). Functionally, catalyzes the ferredoxin-dependent oxidative decarboxylation of pyruvate. Required for the transfer of electrons from pyruvate to ferredoxin. Ferredoxin I and ferredoxin II, which are single 4Fe-4S cluster ferredoxins are the most effective electron carriers of POR. This chain is Pyruvate:ferredoxin oxidoreductase, found in Desulfocurvibacter africanus (Desulfovibrio africanus).